A 336-amino-acid chain; its full sequence is Ribosomal RNA large subunit methyltransferase F (336 aa).

This sequence belongs to the methyltransferase superfamily. METTL16/RlmF family.

The protein localises to the cytoplasm. The enzyme catalyses adenosine(1618) in 23S rRNA + S-adenosyl-L-methionine = N(6)-methyladenosine(1618) in 23S rRNA + S-adenosyl-L-homocysteine + H(+). In terms of biological role, specifically methylates the adenine in position 1618 of 23S rRNA. The sequence is that of Ribosomal RNA large subunit methyltransferase F from Serratia proteamaculans (strain 568).